Here is a 357-residue protein sequence, read N- to C-terminus: Beta-hexosaminidase (357 aa).

Substrate-binding positions include aspartate 72, arginine 80, arginine 146, and 176 to 177 (KH). The Proton donor/acceptor role is filled by histidine 189. Aspartate 260 (nucleophile) is an active-site residue.

It belongs to the glycosyl hydrolase 3 family. NagZ subfamily.

The protein resides in the cytoplasm. It catalyses the reaction Hydrolysis of terminal non-reducing N-acetyl-D-hexosamine residues in N-acetyl-beta-D-hexosaminides.. Its pathway is cell wall biogenesis; peptidoglycan recycling. In terms of biological role, plays a role in peptidoglycan recycling by cleaving the terminal beta-1,4-linked N-acetylglucosamine (GlcNAc) from peptide-linked peptidoglycan fragments, giving rise to free GlcNAc, anhydro-N-acetylmuramic acid and anhydro-N-acetylmuramic acid-linked peptides. The polypeptide is Beta-hexosaminidase (Hydrogenovibrio crunogenus (strain DSM 25203 / XCL-2) (Thiomicrospira crunogena)).